A 906-amino-acid polypeptide reads, in one-letter code: ATP-dependent DNA helicase PIF1 (906 aa).

Disordered regions lie at residues Asp77–Phe146 and Leu229–Val297. The span at Ser78–Ser87 shows a compositional bias: basic and acidic residues. Over residues Lys88 to Thr119 the composition is skewed to polar residues. Residues Glu120–Asp132 show a composition bias toward basic and acidic residues. The segment covering Asn234 to Val261 has biased composition (polar residues). Over residues Gln273–Val291 the composition is skewed to low complexity. Gly390–Ser397 is an ATP binding site. A DNA-binding region spans residues Gln840 to Phe859.

The protein belongs to the helicase family. PIF1 subfamily. As to quaternary structure, monomer. Interacts with telomerase. Requires Mg(2+) as cofactor.

Its subcellular location is the nucleus. It is found in the mitochondrion. It catalyses the reaction Couples ATP hydrolysis with the unwinding of duplex DNA at the replication fork by translocating in the 5'-3' direction. This creates two antiparallel DNA single strands (ssDNA). The leading ssDNA polymer is the template for DNA polymerase III holoenzyme which synthesizes a continuous strand.. The enzyme catalyses ATP + H2O = ADP + phosphate + H(+). DNA-dependent ATPase and 5'-3' DNA helicase required for the maintenance of both mitochondrial and nuclear genome stability. Efficiently unwinds G-quadruplex (G4) DNA structures and forked RNA-DNA hybrids. Resolves G4 structures, preventing replication pausing and double-strand breaks (DSBs) at G4 motifs. Involved in the maintenance of telomeric DNA. Inhibits telomere elongation, de novo telomere formation and telomere addition to DSBs via catalytic inhibition of telomerase. Reduces the processivity of telomerase by displacing active telomerase from DNA ends. Releases telomerase by unwinding the short telomerase RNA/telomeric DNA hybrid that is the intermediate in the telomerase reaction. Involved in the maintenance of ribosomal (rDNA). Required for efficient fork arrest at the replication fork barrier within rDNA. Involved in the maintenance of mitochondrial (mtDNA). Required to maintain mtDNA under conditions that introduce dsDNA breaks in mtDNA, either preventing or repairing dsDNA breaks. May inhibit replication progression to allow time for repair. May have a general role in chromosomal replication by affecting Okazaki fragment maturation. May have a role in conjunction with DNA2 helicase/nuclease in 5'-flap extension during Okazaki fragment processing. This chain is ATP-dependent DNA helicase PIF1, found in Candida albicans (strain SC5314 / ATCC MYA-2876) (Yeast).